The sequence spans 322 residues: Trans-acting factor B (322 aa).

Positions 35–188 (DDAEAVFPTS…ASTQEAETAE (154 aa)) are disordered. Composition is skewed to polar residues over residues 72–97 (QEST…SIGR) and 110–166 (QESP…TSRA). Positions 167–178 (AETRERSPEHTE) are enriched in basic and acidic residues.

In terms of biological role, plasmid partition require REP1, REP2, and a cis-acting DNA sequence (known as STB). REP1 may act by intercalating in the yeast nuclear matrix and binding STB either directly or via REP2. The chain is Trans-acting factor B (B) from Zygosaccharomyces bisporus.